Consider the following 431-residue polypeptide: Cyclin-B2-4 (431 aa).

The interval 1–30 (MGGSDENRHGVIGPMNRQQGGLRGGKVIPT) is disordered.

The protein belongs to the cyclin family. Cyclin AB subfamily. As to quaternary structure, interacts with SMR11.

This Arabidopsis thaliana (Mouse-ear cress) protein is Cyclin-B2-4 (CYCB2-4).